The sequence spans 208 residues: Ribosome maturation factor RimP (208 aa).

Residues 175 to 208 form a disordered region; sequence GEDVEDLVADPGADDELDELDELDELDDGDEDEQ. Acidic residues predominate over residues 177–208; it reads DVEDLVADPGADDELDELDELDELDDGDEDEQ.

The protein belongs to the RimP family.

It localises to the cytoplasm. Functionally, required for maturation of 30S ribosomal subunits. The chain is Ribosome maturation factor RimP from Kineococcus radiotolerans (strain ATCC BAA-149 / DSM 14245 / SRS30216).